Consider the following 353-residue polypeptide: MACCLSEEAKEQKRINCEIEKELRKAKRDARRELKLLLLGTGESGKSTFIKQMRIIHGTGYSEEDKRGFIKIVYQNIFMAMHSMIRAMDTIKISFEVADNEENAIMIRQVDYETVTTLDSQSVEAILSLWADAGIQECYDRRREYQLTDSAKYYLDAVDRIAEPNYLPTLQDILRVRVPTTGIIEYPFDLDSIIFRMVDVGGQRSERRKWIHCFENVTSIMFLVALSEYDQVLVESDNENRMEESKALFRTIITYPWFQNSSVILFLNKKDLLEEKIMHSHLVDYFPEFDGQKKDAQGAREFILRMFVDLNPDPDKIIYSHFTCATDTENIRFVFAAVKDTILQLNLKEYNLV.

S-palmitoyl cysteine attachment occurs at residues Cys3 and Cys4. The G-alpha domain maps to Arg32–Val353. Positions Lys35 to Thr48 are G1 motif. GTP is bound by residues Gly40–Ser47, Leu174–Thr180, Asp199–Gln203, Asn268–Asp271, and Ala325. Residues Ser47 and Thr180 each contribute to the Mg(2+) site. Residues Asp172–Thr180 are G2 motif. Residues Phe195 to Arg204 are G3 motif. The G4 motif stretch occupies residues Ile264 to Asp271. The tract at residues Thr323–Thr328 is G5 motif.

It belongs to the G-alpha family. G(q) subfamily. In terms of assembly, g proteins are composed of 3 units; alpha, beta and gamma. The alpha chain contains the guanine nucleotide binding site.

Its function is as follows. Guanine nucleotide-binding proteins (G proteins) are involved as modulators or transducers in various transmembrane signaling systems. The chain is Guanine nucleotide-binding protein G(q) subunit alpha (SCGQA) from Mizuhopecten yessoensis (Japanese scallop).